A 38-amino-acid chain; its full sequence is Large ribosomal subunit protein bL36 (38 aa).

The protein belongs to the bacterial ribosomal protein bL36 family.

This Myxococcus xanthus (strain DK1622) protein is Large ribosomal subunit protein bL36.